Reading from the N-terminus, the 93-residue chain is Protein E7 (93 aa).

Positions 1–41 (MVGEMPALKDLVLQLEPSVLDLDLYCYEEVPPDDIEEELVS) are E7 terminal domain. Residues 24–28 (LYCYE) carry the LXCXE motif; interaction with host RB1 and TMEM173/STING motif. A zinc finger spans residues 52 to 88 (CAYCEKLVRLTVLADHSAIRQLEELLLRSLNIVCPLC). The short motif at 70 to 78 (IRQLEELLL) is the Nuclear export signal element.

This sequence belongs to the papillomaviridae E7 protein family. As to quaternary structure, homodimer. Homooligomer. Interacts with host RB1; this interaction induces dissociation of RB1-E2F1 complex thereby disrupting RB1 activity. Interacts with host EP300; this interaction represses EP300 transcriptional activity. Interacts with protein E2; this interaction inhibits E7 oncogenic activity. Interacts with host TMEM173/STING; this interaction impairs the ability of TMEM173/STING to sense cytosolic DNA and promote the production of type I interferon (IFN-alpha and IFN-beta). Post-translationally, highly phosphorylated.

The protein resides in the host cytoplasm. It is found in the host nucleus. Plays a role in viral genome replication by driving entry of quiescent cells into the cell cycle. Stimulation of progression from G1 to S phase allows the virus to efficiently use the cellular DNA replicating machinery to achieve viral genome replication. E7 protein has both transforming and trans-activating activities. Induces the disassembly of the E2F1 transcription factor from RB1, with subsequent transcriptional activation of E2F1-regulated S-phase genes. Interferes with host histone deacetylation mediated by HDAC1 and HDAC2, leading to transcription activation. Also plays a role in the inhibition of both antiviral and antiproliferative functions of host interferon alpha. Interaction with host TMEM173/STING impairs the ability of TMEM173/STING to sense cytosolic DNA and promote the production of type I interferon (IFN-alpha and IFN-beta). The protein is Protein E7 of Homo sapiens (Human).